The chain runs to 93 residues: Small ribosomal subunit protein uS15 (93 aa).

Belongs to the universal ribosomal protein uS15 family. In terms of assembly, part of the 30S ribosomal subunit. Forms a bridge to the 50S subunit in the 70S ribosome, contacting the 23S rRNA.

Its function is as follows. One of the primary rRNA binding proteins, it binds directly to 16S rRNA where it helps nucleate assembly of the platform of the 30S subunit by binding and bridging several RNA helices of the 16S rRNA. In terms of biological role, forms an intersubunit bridge (bridge B4) with the 23S rRNA of the 50S subunit in the ribosome. This is Small ribosomal subunit protein uS15 from Ehrlichia canis (strain Jake).